The sequence spans 201 residues: Myelomonocytic growth factor (201 aa).

The signal sequence occupies residues 1-23; the sequence is MCCLTPVLALALVLGAPWQALHG. Intrachain disulfides connect cysteine 61–cysteine 67 and cysteine 89–cysteine 99. 2 N-linked (GlcNAc...) asparagine glycosylation sites follow: asparagine 123 and asparagine 137.

The protein belongs to the IL-6 superfamily.

It localises to the secreted. Hematopoietic growth factor that stimulates the proliferation and colony formation of normal and transformed avian cells of the myeloid lineage. The sequence is that of Myelomonocytic growth factor from Gallus gallus (Chicken).